Here is a 671-residue protein sequence, read N- to C-terminus: DNA ligase (671 aa).

Residues 32–36 (DAEYD), 81–82 (SL), and E113 each bind NAD(+). K115 (N6-AMP-lysine intermediate) is an active-site residue. NAD(+)-binding residues include R136, E173, K290, and K314. Zn(2+) is bound by residues C408, C411, C426, and C432. Residues 593–671 (EIDSPFAGKT…EAEMLRLLGS (79 aa)) form the BRCT domain.

Belongs to the NAD-dependent DNA ligase family. LigA subfamily. Requires Mg(2+) as cofactor. Mn(2+) is required as a cofactor.

It carries out the reaction NAD(+) + (deoxyribonucleotide)n-3'-hydroxyl + 5'-phospho-(deoxyribonucleotide)m = (deoxyribonucleotide)n+m + AMP + beta-nicotinamide D-nucleotide.. Functionally, DNA ligase that catalyzes the formation of phosphodiester linkages between 5'-phosphoryl and 3'-hydroxyl groups in double-stranded DNA using NAD as a coenzyme and as the energy source for the reaction. It is essential for DNA replication and repair of damaged DNA. This is DNA ligase from Shigella flexneri serotype 5b (strain 8401).